We begin with the raw amino-acid sequence, 113 residues long: ATP-dependent Clp protease adapter protein ClpS (113 aa).

The protein belongs to the ClpS family. As to quaternary structure, binds to the N-terminal domain of the chaperone ClpA.

Involved in the modulation of the specificity of the ClpAP-mediated ATP-dependent protein degradation. The protein is ATP-dependent Clp protease adapter protein ClpS of Corynebacterium diphtheriae (strain ATCC 700971 / NCTC 13129 / Biotype gravis).